A 142-amino-acid polypeptide reads, in one-letter code: Large ribosomal subunit protein uL13 (142 aa).

Belongs to the universal ribosomal protein uL13 family. In terms of assembly, part of the 50S ribosomal subunit.

Functionally, this protein is one of the early assembly proteins of the 50S ribosomal subunit, although it is not seen to bind rRNA by itself. It is important during the early stages of 50S assembly. This chain is Large ribosomal subunit protein uL13, found in Stenotrophomonas maltophilia (strain R551-3).